Consider the following 107-residue polypeptide: Putative double-stranded DNA mimic protein HI_1450 (107 aa).

It belongs to the putative dsDNA mimic protein family. Monomer in solution. Interacts with the DNA-binding protein HU.

In terms of biological role, may act as a double-stranded DNA (dsDNA) mimic. Probably regulates the activity of the DNA-binding protein HU. The chain is Putative double-stranded DNA mimic protein HI_1450 from Haemophilus influenzae (strain ATCC 51907 / DSM 11121 / KW20 / Rd).